An 89-amino-acid chain; its full sequence is NAD(P)H-quinone oxidoreductase subunit L (89 aa).

Helical transmembrane passes span 29 to 46 (VLGG…FYWM) and 59 to 79 (LFIY…APFL).

Belongs to the complex I NdhL subunit family. NDH-1 can be composed of about 15 different subunits; different subcomplexes with different compositions have been identified which probably have different functions.

The protein resides in the cellular thylakoid membrane. The enzyme catalyses a plastoquinone + NADH + (n+1) H(+)(in) = a plastoquinol + NAD(+) + n H(+)(out). It carries out the reaction a plastoquinone + NADPH + (n+1) H(+)(in) = a plastoquinol + NADP(+) + n H(+)(out). NDH-1 shuttles electrons from an unknown electron donor, via FMN and iron-sulfur (Fe-S) centers, to quinones in the respiratory and/or the photosynthetic chain. The immediate electron acceptor for the enzyme in this species is believed to be plastoquinone. Couples the redox reaction to proton translocation, and thus conserves the redox energy in a proton gradient. Cyanobacterial NDH-1 also plays a role in inorganic carbon-concentration. The protein is NAD(P)H-quinone oxidoreductase subunit L of Prochlorococcus marinus (strain NATL1A).